Consider the following 258-residue polypeptide: Imidazole glycerol phosphate synthase subunit HisF (258 aa).

Active-site residues include Asp11 and Asp130.

This sequence belongs to the HisA/HisF family. As to quaternary structure, heterodimer of HisH and HisF.

The protein localises to the cytoplasm. The enzyme catalyses 5-[(5-phospho-1-deoxy-D-ribulos-1-ylimino)methylamino]-1-(5-phospho-beta-D-ribosyl)imidazole-4-carboxamide + L-glutamine = D-erythro-1-(imidazol-4-yl)glycerol 3-phosphate + 5-amino-1-(5-phospho-beta-D-ribosyl)imidazole-4-carboxamide + L-glutamate + H(+). Its pathway is amino-acid biosynthesis; L-histidine biosynthesis; L-histidine from 5-phospho-alpha-D-ribose 1-diphosphate: step 5/9. In terms of biological role, IGPS catalyzes the conversion of PRFAR and glutamine to IGP, AICAR and glutamate. The HisF subunit catalyzes the cyclization activity that produces IGP and AICAR from PRFAR using the ammonia provided by the HisH subunit. The polypeptide is Imidazole glycerol phosphate synthase subunit HisF (Synechococcus sp. (strain CC9902)).